The following is a 507-amino-acid chain: AMP phosphorylase (507 aa).

Residues glycine 168, 194–199 (SRAITG), and threonine 203 contribute to the AMP site. Aspartate 256 functions as the Proton donor in the catalytic mechanism. AMP contacts are provided by serine 264 and lysine 288.

This sequence belongs to the thymidine/pyrimidine-nucleoside phosphorylase family. Type 2 subfamily.

It carries out the reaction AMP + phosphate = alpha-D-ribose 1,5-bisphosphate + adenine. It catalyses the reaction CMP + phosphate = cytosine + alpha-D-ribose 1,5-bisphosphate. The catalysed reaction is UMP + phosphate = alpha-D-ribose 1,5-bisphosphate + uracil. In terms of biological role, catalyzes the conversion of AMP and phosphate to adenine and ribose 1,5-bisphosphate (R15P). Exhibits phosphorylase activity toward CMP and UMP in addition to AMP. Functions in an archaeal AMP degradation pathway, together with R15P isomerase and RubisCO. The polypeptide is AMP phosphorylase (Methanosarcina mazei (strain ATCC BAA-159 / DSM 3647 / Goe1 / Go1 / JCM 11833 / OCM 88) (Methanosarcina frisia)).